Consider the following 181-residue polypeptide: NADH-quinone oxidoreductase subunit I (181 aa).

4Fe-4S ferredoxin-type domains are found at residues T51–S80 and K90–D119. [4Fe-4S] cluster contacts are provided by C60, C63, C66, C70, C99, C102, C105, and C109.

The protein belongs to the complex I 23 kDa subunit family. In terms of assembly, NDH-1 is composed of 13 different subunits. Subunits NuoA, H, J, K, L, M, N constitute the membrane sector of the complex. The cofactor is [4Fe-4S] cluster.

It is found in the cell membrane. It catalyses the reaction a quinone + NADH + 5 H(+)(in) = a quinol + NAD(+) + 4 H(+)(out). In terms of biological role, NDH-1 shuttles electrons from NADH, via FMN and iron-sulfur (Fe-S) centers, to quinones in the respiratory chain. The immediate electron acceptor for the enzyme in this species is believed to be ubiquinone. Couples the redox reaction to proton translocation (for every two electrons transferred, four hydrogen ions are translocated across the cytoplasmic membrane), and thus conserves the redox energy in a proton gradient. In Buchnera aphidicola subsp. Cinara cedri (strain Cc), this protein is NADH-quinone oxidoreductase subunit I.